A 270-amino-acid polypeptide reads, in one-letter code: 3-methyl-2-oxobutanoate hydroxymethyltransferase (270 aa).

Mg(2+) contacts are provided by Asp43 and Asp82. 3-methyl-2-oxobutanoate contacts are provided by residues 43–44 (DS), Asp82, and Lys112. Glu114 provides a ligand contact to Mg(2+). The active-site Proton acceptor is Glu179.

It belongs to the PanB family. As to quaternary structure, homodecamer; pentamer of dimers. The cofactor is Mg(2+).

It localises to the cytoplasm. It carries out the reaction 3-methyl-2-oxobutanoate + (6R)-5,10-methylene-5,6,7,8-tetrahydrofolate + H2O = 2-dehydropantoate + (6S)-5,6,7,8-tetrahydrofolate. The protein operates within cofactor biosynthesis; (R)-pantothenate biosynthesis; (R)-pantoate from 3-methyl-2-oxobutanoate: step 1/2. Functionally, catalyzes the reversible reaction in which hydroxymethyl group from 5,10-methylenetetrahydrofolate is transferred onto alpha-ketoisovalerate to form ketopantoate. This is 3-methyl-2-oxobutanoate hydroxymethyltransferase from Oceanobacillus iheyensis (strain DSM 14371 / CIP 107618 / JCM 11309 / KCTC 3954 / HTE831).